We begin with the raw amino-acid sequence, 762 residues long: Phospholipase D alpha 4 (762 aa).

The C2 domain maps to 1-116; sequence MELEEQKKYF…VINGFFPLIA (116 aa). Aspartate 172 lines the Ca(2+) pocket. Residues 301-339 enclose the PLD phosphodiesterase 1 domain; the sequence is TAFAHHQKTITLDTRVTNSSTKEREIMSFLGGFDLCDGR. Residues histidine 306, lysine 308, and aspartate 313 contribute to the active site. Histidine 306 is a binding site for a 1,2-diacyl-sn-glycero-3-phosphate. The Ca(2+) site is built by histidine 345 and histidine 377. 2 residues coordinate a 1,2-diacyl-sn-glycero-3-phosphate: glutamine 477 and histidine 615. The 28-residue stretch at 610 to 637 folds into the PLD phosphodiesterase 2 domain; that stretch reads FMVYVHSKLMIVDDTYILIGSANINQRS. Residues histidine 615, lysine 617, and aspartate 622 contribute to the active site. Residue glutamate 671 coordinates Ca(2+).

The protein belongs to the phospholipase D family. C2-PLD subfamily. It depends on Ca(2+) as a cofactor. In terms of tissue distribution, expressed in roots, leaves, stems, siliques,flowers and inflorescences.

Its subcellular location is the cell membrane. It carries out the reaction a 1,2-diacyl-sn-glycero-3-phosphocholine + H2O = a 1,2-diacyl-sn-glycero-3-phosphate + choline + H(+). Its function is as follows. Hydrolyzes glycerol-phospholipids at the terminal phosphodiesteric bond to generate phosphatidic acids (PA). Promotes growth and plays a role in nitrogen signaling. The protein is Phospholipase D alpha 4 of Arabidopsis thaliana (Mouse-ear cress).